The chain runs to 211 residues: Imidazole glycerol phosphate synthase subunit HisH (211 aa).

The Glutamine amidotransferase type-1 domain occupies Val3 to Ala211. Cys81 serves as the catalytic Nucleophile. Residues His186 and Glu188 contribute to the active site.

In terms of assembly, heterodimer of HisH and HisF.

Its subcellular location is the cytoplasm. It catalyses the reaction 5-[(5-phospho-1-deoxy-D-ribulos-1-ylimino)methylamino]-1-(5-phospho-beta-D-ribosyl)imidazole-4-carboxamide + L-glutamine = D-erythro-1-(imidazol-4-yl)glycerol 3-phosphate + 5-amino-1-(5-phospho-beta-D-ribosyl)imidazole-4-carboxamide + L-glutamate + H(+). It carries out the reaction L-glutamine + H2O = L-glutamate + NH4(+). Its pathway is amino-acid biosynthesis; L-histidine biosynthesis; L-histidine from 5-phospho-alpha-D-ribose 1-diphosphate: step 5/9. Functionally, IGPS catalyzes the conversion of PRFAR and glutamine to IGP, AICAR and glutamate. The HisH subunit catalyzes the hydrolysis of glutamine to glutamate and ammonia as part of the synthesis of IGP and AICAR. The resulting ammonia molecule is channeled to the active site of HisF. The protein is Imidazole glycerol phosphate synthase subunit HisH of Trichormus variabilis (strain ATCC 29413 / PCC 7937) (Anabaena variabilis).